We begin with the raw amino-acid sequence, 351 residues long: DNA polymerase IV (351 aa).

One can recognise a UmuC domain in the interval 4 to 185 (IIHIDMDCFF…LPLAKIPGVG (182 aa)). Positions 8 and 103 each coordinate Mg(2+). Glu-104 is a catalytic residue.

This sequence belongs to the DNA polymerase type-Y family. Monomer. Mg(2+) is required as a cofactor.

The protein resides in the cytoplasm. It catalyses the reaction DNA(n) + a 2'-deoxyribonucleoside 5'-triphosphate = DNA(n+1) + diphosphate. Poorly processive, error-prone DNA polymerase involved in untargeted mutagenesis. Copies undamaged DNA at stalled replication forks, which arise in vivo from mismatched or misaligned primer ends. These misaligned primers can be extended by PolIV. Exhibits no 3'-5' exonuclease (proofreading) activity. May be involved in translesional synthesis, in conjunction with the beta clamp from PolIII. In Salmonella paratyphi A (strain ATCC 9150 / SARB42), this protein is DNA polymerase IV.